The following is a 513-amino-acid chain: 2-isopropylmalate synthase (513 aa).

In terms of domain architecture, Pyruvate carboxyltransferase spans 5-268; that stretch reads LIIFDTTLRD…DVGVDTTQIV (264 aa). Mn(2+) contacts are provided by D14, H202, H204, and N239. The regulatory domain stretch occupies residues 394-513; sequence RFVSLSQRSE…KSSEKLNPQI (120 aa).

This sequence belongs to the alpha-IPM synthase/homocitrate synthase family. LeuA type 1 subfamily. Homodimer. The cofactor is Mn(2+).

It localises to the cytoplasm. It carries out the reaction 3-methyl-2-oxobutanoate + acetyl-CoA + H2O = (2S)-2-isopropylmalate + CoA + H(+). It functions in the pathway amino-acid biosynthesis; L-leucine biosynthesis; L-leucine from 3-methyl-2-oxobutanoate: step 1/4. Functionally, catalyzes the condensation of the acetyl group of acetyl-CoA with 3-methyl-2-oxobutanoate (2-ketoisovalerate) to form 3-carboxy-3-hydroxy-4-methylpentanoate (2-isopropylmalate). In Ralstonia nicotianae (strain ATCC BAA-1114 / GMI1000) (Ralstonia solanacearum), this protein is 2-isopropylmalate synthase.